The following is a 507-amino-acid chain: Protein adenylyltransferase fic-1 (507 aa).

The helical transmembrane segment at 40-56 (YSLTTVVLVSLVVTLVC) threads the bilayer. 2 TPR repeats span residues 146-179 (AILA…APNN) and 180-213 (PQIL…DPGN). The short motif at 269-274 (TVAIEG) is the Inhibitory (S/T)XXXE(G/N) motif element. An ATP-binding site is contributed by Glu-273. Residues 325–460 (ISIDDILEMH…LRPFVRYVAK (136 aa)) form the Fido domain. At Thr-351 the chain carries O-AMP-threonine; by autocatalysis. Residue 356–359 (VGKF) participates in ATP binding. Residue His-403 is part of the active site. ATP-binding positions include 407–414 (DGNGRTAR), 439–440 (YY), and Asn-447. Thr-475 bears the O-AMP-threonine; by autocatalysis mark. Residues 482 to 507 (NGEEPNLTAEESKVSEKIETECRAGS) form a disordered region. The segment covering 491 to 507 (EESKVSEKIETECRAGS) has biased composition (basic and acidic residues).

The protein belongs to the fic family. In terms of assembly, forms homodimers; homodimerization might be required for adenylyltransferase activity.

Its subcellular location is the endoplasmic reticulum membrane. It localises to the nucleus membrane. The catalysed reaction is L-tyrosyl-[protein] + ATP = O-(5'-adenylyl)-L-tyrosyl-[protein] + diphosphate. It carries out the reaction L-threonyl-[protein] + ATP = 3-O-(5'-adenylyl)-L-threonyl-[protein] + diphosphate. The enzyme catalyses 3-O-(5'-adenylyl)-L-threonyl-[protein] + H2O = L-threonyl-[protein] + AMP + H(+). With respect to regulation, the side chain of Glu-273 determines which of the two opposing activities (AMPylase or de-AMPylase) will take place. In response to endoplasmic reticulum stress, mediates de-AMPylase activity. Adenylyltransferase activity is inhibited by the inhibitory helix present at the N-terminus: Glu-273 binds ATP and competes with ATP-binding at Arg-414, thereby preventing adenylyltransferase activity. In unstressed cells, disengagement of Glu-273 promotes adenylyltransferase activity. Activation dissociates ATP-binding from Glu-273, allowing ordered binding of the entire ATP moiety with the alpha-phosphate in an orientation that is productive for accepting an incoming target hydroxyl side chain. Protein that can both mediate the addition of adenosine 5'-monophosphate (AMP) to specific residues of target proteins (AMPylation), and the removal of the same modification from target proteins (de-AMPylation), depending on the context. The side chain of Glu-273 determines which of the two opposing activities (AMPylase or de-AMPylase) will take place. Adenylyltransferase that mediates the addition of adenosine 5'-monophosphate (AMP) to specific residues of target proteins. In vivo target proteins include the heat-shock 70 family proteins hsp-1 and hsp-3 and the translation elongation factors eef-1A, eef-1G and eef-2. Can AMPylate core histone H3 in vitro. Can also act as a phosphodiesterase by mediating removal of ATP (de-AMPylation) from target proteins. Decreases susceptibility to P.aeruginosa-mediated killing and might therefore play a role in the innate immune response. This is Protein adenylyltransferase fic-1 (fic-1) from Caenorhabditis briggsae.